The primary structure comprises 219 residues: ATP-dependent dethiobiotin synthetase BioD (219 aa).

12-17 is an ATP binding site; the sequence is DLGKTH. Thr-16 contributes to the Mg(2+) binding site. Lys-37 is an active-site residue. Ser-41 serves as a coordination point for substrate. Residues Asp-52, 115 to 118, and 175 to 176 contribute to the ATP site; these read EGAG and SE. The Mg(2+) site is built by Asp-52 and Glu-115.

Belongs to the dethiobiotin synthetase family. As to quaternary structure, homodimer. The cofactor is Mg(2+).

It localises to the cytoplasm. The enzyme catalyses (7R,8S)-7,8-diammoniononanoate + CO2 + ATP = (4R,5S)-dethiobiotin + ADP + phosphate + 3 H(+). It functions in the pathway cofactor biosynthesis; biotin biosynthesis; biotin from 7,8-diaminononanoate: step 1/2. In terms of biological role, catalyzes a mechanistically unusual reaction, the ATP-dependent insertion of CO2 between the N7 and N8 nitrogen atoms of 7,8-diaminopelargonic acid (DAPA, also called 7,8-diammoniononanoate) to form a ureido ring. This is ATP-dependent dethiobiotin synthetase BioD from Caulobacter vibrioides (strain ATCC 19089 / CIP 103742 / CB 15) (Caulobacter crescentus).